The primary structure comprises 489 residues: Lysine--tRNA ligase (489 aa).

2 residues coordinate Mg(2+): glutamate 399 and glutamate 406.

The protein belongs to the class-II aminoacyl-tRNA synthetase family. Homodimer. Mg(2+) is required as a cofactor.

It is found in the cytoplasm. The catalysed reaction is tRNA(Lys) + L-lysine + ATP = L-lysyl-tRNA(Lys) + AMP + diphosphate. The protein is Lysine--tRNA ligase of Malacoplasma penetrans (strain HF-2) (Mycoplasma penetrans).